The sequence spans 423 residues: Testin (423 aa).

2 disordered regions span residues 1–21 (MSAT…ACAS) and 138–169 (EKQP…PSKC). In terms of domain architecture, PET spans 97–204 (MILTNPVAAK…GDVKFPSEMN (108 aa)). Basic and acidic residues predominate over residues 160–169 (PAHDQDPSKC). LIM zinc-binding domains follow at residues 236–299 (YSCY…CDSE), 301–361 (PRCA…NHAV), and 364–423 (QGCH…RMMS).

The protein belongs to the prickle / espinas / testin family. As to quaternary structure, interacts via LIM domain 1 with ZYX. Interacts (via LIM domain 3) with ENAH and VASP. Interacts with ALKBH4, talin, actin, alpha-actinin, GRIP1 and PXN. Interacts (via LIM domain 2) with ACTL7A (via N-terminus). Heterodimer with ACTL7A; the heterodimer interacts with ENAH to form a heterotrimer. Detected at the acrosome of round spermatids (at protein level). Isoform TES1 transcript is highly expressed in adult testis and detected at low levels in other tissues. Isoform TES2 transcript is highly expressed in testis, kidney and spleen; intermediate in thymus, submaxillary gland and lung; detected at low levels in other tissues.

The protein resides in the cytoplasm. The protein localises to the cell junction. It is found in the focal adhesion. In terms of biological role, scaffold protein that may play a role in cell adhesion, cell spreading and in the reorganization of the actin cytoskeleton. Plays a role in the regulation of cell proliferation. May act as a tumor suppressor. In Mus musculus (Mouse), this protein is Testin (Tes).